We begin with the raw amino-acid sequence, 658 residues long: Aminopeptidase P1 (658 aa).

2 residues coordinate a peptide: R69 and H436. Mn(2+) contacts are provided by D456, D467, and H530. A peptide-binding residues include H530, H539, and E563. Mn(2+) is bound by residues E563 and E577.

The protein belongs to the peptidase M24B family. In terms of assembly, homodimer. Interacts with N-1-naphthylphthalamic acid (NPA). Interacts with NBCL/BOP2/COCH around the plasma membrane and in the nucleus; this interaction disturbs its regulation of the nuclear transcription factor Y subunit (NF-YA1). It depends on Mn(2+) as a cofactor. Requires Zn(2+) as cofactor. In terms of tissue distribution, expressed at similar levels in shoot apical meristems (SAM), root meristems (RM), root apical meristems (RAM), roots and leaves and, to a slightly lesser degree, in root nodules.

It is found in the nucleus. The protein localises to the cytoplasm. Its subcellular location is the cell membrane. The protein resides in the microsome membrane. The catalysed reaction is Release of any N-terminal amino acid, including proline, that is linked to proline, even from a dipeptide or tripeptide.. Functionally, catalyzes the removal of a penultimate prolyl residue from the N-termini of peptides, such as Arg-Pro-Pro. Aminopeptidase that binds to the auxin transport inhibitor N-1-naphthylphthalamic acid (NPA). May play a negative role in the regulation of PIN auxin transport proteins. Involved in the coordination of the symbiotic nodule developmental program; prevents the formation of root nodules by regulating the expression of the nuclear transcription factor Y subunit (NF-YA1), a key nodulin. The polypeptide is Aminopeptidase P1 (Lotus japonicus (Lotus corniculatus var. japonicus)).